Reading from the N-terminus, the 307-residue chain is Secondary metabolism regulator LAE1 (307 aa).

It belongs to the methyltransferase superfamily. LaeA methyltransferase family. Component of the heterotrimeric velvet complex composed of LAE1, VEL1 and VEL2; VEL1 acting as a bridging protein between LAE1 and VEL2.

It localises to the nucleus. The enzyme catalyses L-methionyl-[protein] + S-adenosyl-L-methionine = S-methyl-L-methionyl-[protein] + S-adenosyl-L-homocysteine. Its function is as follows. Methyltransferase that performs automethylation. No other methyl-accepting substrate has been identified yet. Component of the velvet transcription factor complex that acts as a global regulator for secondary metabolite gene expression. Controls the expression of the T-toxin gene cluster. Promotes oxidative stress tolerance and acts as a virulence factors during infection. Negatively regulate mycelial pigmentation and controls sexual development, as well as asexual development during vegetative growth. The chain is Secondary metabolism regulator LAE1 from Cochliobolus heterostrophus (strain C5 / ATCC 48332 / race O) (Southern corn leaf blight fungus).